The sequence spans 118 residues: MPRVKRGVTARRRHKKVLNQAKGYYGARSRVFRVAKQAVIKAGQYAYRDRRQRKRQFRALWIARINAGARDNGLSYSRLIAGLKRANVEIDRKVLADLAMNEKAAFAAVVQKAKEALA.

The protein belongs to the bacterial ribosomal protein bL20 family.

In terms of biological role, binds directly to 23S ribosomal RNA and is necessary for the in vitro assembly process of the 50S ribosomal subunit. It is not involved in the protein synthesizing functions of that subunit. The chain is Large ribosomal subunit protein bL20 from Hahella chejuensis (strain KCTC 2396).